The chain runs to 471 residues: MENFKHLPEPFRIRVIEPVKRTTRAYREEAIIKSGMNPFLLDSEDVFIDLLTDSGTGAVTQSMQAAMMRGDEAYSGSRSYYALAESVKNIFGYQYTIPTHQGRGAEQIYIPVLIKKREQEKGLDRSKMVAFSNYFFDTTQGHSQINGCTVRNVYIKEAFDTGVRYDFKGNFDLEGLERGIEEVGPNNVPYIVATITSNSAGGQPVSLANLKAMYSIAKKYDIPVVMDSARFAENAYFIKQREAEYKDWTIEQITRETYKYADMLAMSAKKDAMVPMGGLLCMKDDSFFDVYTECRTLCVVQEGFPTYGGLEGGAMERLAVGLYDGMNLDWLAYRIAQVQYLVDGLEEIGVVCQQAGGHAAFVDAGKLLPHIPADQFPAQALACELYKVAGIRAVEIGSFLLGRDPKTGKQLPCPAELLRLTIPRATYTQTHMDFIIEAFKHVKENASNIKGLTFTYEPKVLRHFTAKLKEV.

An N6-acetyllysine mark is found at lysine 5, lysine 115, and lysine 156. Lysine 270 carries the post-translational modification N6-(pyridoxal phosphate)lysine. Position 450 is an N6-acetyllysine (lysine 450).

This sequence belongs to the beta-eliminating lyase family. Homotetramer. Requires pyridoxal 5'-phosphate as cofactor.

It carries out the reaction L-tryptophan + H2O = indole + pyruvate + NH4(+). Its pathway is amino-acid degradation; L-tryptophan degradation via pyruvate pathway; indole and pyruvate from L-tryptophan: step 1/1. This Escherichia coli O157:H7 protein is Tryptophanase (tnaA).